Reading from the N-terminus, the 1107-residue chain is Integrator complex subunit 6 homolog (1107 aa).

The 194-residue stretch at 2–195 (LITFVVDTSG…LPMEPAIAPM (194 aa)) folds into the VWFA domain. Disordered regions lie at residues 454 to 515 (RIIN…SGNL), 542 to 572 (DNET…SSNI), 629 to 801 (TLRD…VSSP), 818 to 861 (QISS…IVNN), and 946 to 1034 (VVRP…TTPN). 2 stretches are compositionally biased toward low complexity: residues 460 to 513 (QQQQ…SGSG) and 546 to 562 (SENS…STTG). The segment covering 629–639 (TLRDIDDDKKP) has biased composition (basic and acidic residues). Over residues 693 to 801 (PSLPTLNSLS…PIPSTTVSSP (109 aa)) the composition is skewed to low complexity. Pro residues predominate over residues 846–857 (SPPPPPPPPPLP). The span at 956–975 (PLTIDTLTSSSSSSTIPTTT) shows a compositional bias: low complexity. The span at 976–996 (NGSLSTHDTPNTSPTLSSINY) shows a compositional bias: polar residues. Residues 997–1034 (NNNNNNNNNNNNNNNNNNNNNNNNNNRKNSIITTTTPN) show a composition bias toward low complexity. Residues 1041-1103 (IKFVHKEIRR…SLISKLIGYI (63 aa)) form the MIF4G domain.

It belongs to the Integrator subunit 6 family. As to quaternary structure, component of the Integrator complex. The core complex associates with protein phosphatase 2A subunits, to form the Integrator-PP2A (INTAC) complex.

The protein localises to the nucleus. Its subcellular location is the chromosome. Its function is as follows. Component of the integrator complex, a multiprotein complex that terminates RNA polymerase II (Pol II) transcription in the promoter-proximal region of genes. The integrator complex provides a quality checkpoint during transcription elongation by driving premature transcription termination of transcripts that are unfavorably configured for transcriptional elongation: the complex terminates transcription by (1) catalyzing dephosphorylation of the C-terminal domain (CTD) of Pol II subunit polr2a, (2) degrading the exiting nascent RNA transcript via endonuclease activity and (3) promoting the release of Pol II from bound DNA. The integrator complex is also involved in terminating the synthesis of non-coding Pol II transcripts, such as enhancer RNAs (eRNAs), small nuclear RNAs (snRNAs), telomerase RNAs and long non-coding RNAs (lncRNAs). Within the integrator complex, INTS6 acts as a molecular adapter that promotes assembly of protein phosphatase 2A (PP2A) subunits to the integrator core complex, promoting recruitment of PP2A to transcription pause-release checkpoint. The polypeptide is Integrator complex subunit 6 homolog (ints6) (Dictyostelium discoideum (Social amoeba)).